Consider the following 293-residue polypeptide: Pyridoxal 5'-phosphate synthase subunit PdxS (293 aa).

A D-ribose 5-phosphate-binding site is contributed by D23. K80 functions as the Schiff-base intermediate with D-ribose 5-phosphate in the catalytic mechanism. A D-ribose 5-phosphate-binding site is contributed by G152. R164 serves as a coordination point for D-glyceraldehyde 3-phosphate. D-ribose 5-phosphate contacts are provided by residues G213 and 234–235 (GS).

This sequence belongs to the PdxS/SNZ family. As to quaternary structure, in the presence of PdxT, forms a dodecamer of heterodimers.

It carries out the reaction aldehydo-D-ribose 5-phosphate + D-glyceraldehyde 3-phosphate + L-glutamine = pyridoxal 5'-phosphate + L-glutamate + phosphate + 3 H2O + H(+). The protein operates within cofactor biosynthesis; pyridoxal 5'-phosphate biosynthesis. Functionally, catalyzes the formation of pyridoxal 5'-phosphate from ribose 5-phosphate (RBP), glyceraldehyde 3-phosphate (G3P) and ammonia. The ammonia is provided by the PdxT subunit. Can also use ribulose 5-phosphate and dihydroxyacetone phosphate as substrates, resulting from enzyme-catalyzed isomerization of RBP and G3P, respectively. This chain is Pyridoxal 5'-phosphate synthase subunit PdxS, found in Desulfovibrio desulfuricans (strain ATCC 27774 / DSM 6949 / MB).